Consider the following 548-residue polypeptide: Sesquiterpene synthase 12 (548 aa).

Mg(2+) contacts are provided by Asp-299, Asp-303, Asp-444, and Glu-452. Positions 299–303 match the DDXXD motif motif; the sequence is DDTFD.

Belongs to the terpene synthase family. Tpsa subfamily. Requires Mg(2+) as cofactor. Mn(2+) serves as cofactor. Mostly expressed in leaves, to a lower extent in stems, trichomes, flowers and roots and, at low levels, in fruits.

The catalysed reaction is (2E,6E)-farnesyl diphosphate = alpha-humulene + diphosphate. The enzyme catalyses (2E,6E)-farnesyl diphosphate = (-)-(E)-beta-caryophyllene + diphosphate. It carries out the reaction (2Z,6Z)-farnesyl diphosphate = beta-bisabolene + diphosphate. It catalyses the reaction (2E)-geranyl diphosphate = terpinolene + diphosphate. The catalysed reaction is (2E)-geranyl diphosphate = limonene + diphosphate. The enzyme catalyses (2E)-geranyl diphosphate = beta-myrcene + diphosphate. It carries out the reaction (2E)-geranyl diphosphate = (E)-beta-ocimene + diphosphate. It catalyses the reaction (2Z,6Z)-farnesyl diphosphate = gamma-curcumene + diphosphate. The catalysed reaction is (2Z,6Z)-farnesyl diphosphate = (Z)-gamma-bisabolene + diphosphate. It participates in secondary metabolite biosynthesis; terpenoid biosynthesis. Functionally, sesquiterpene synthase involved in the biosynthesis of volatile compounds. Mediates the conversion of (2E,6E)-farnesyl diphosphate (FPP) into (1E,4E,8E)-alpha-humulene and (-)-(E)-beta-caryophyllene, and of (2Z,6Z)-farnesyl diphosphate ((ZZ)-FPP) into beta-bisabolene, gamma-curcumene and (Z)-gamma-bisabolene. Can act with a low efficiency as a monoterpene synthase with geranyl diphosphate (GPP) as substrate, thus producing beta-myrcene, (E)-beta-ocimene, limonene and terpinolene. This Solanum lycopersicum (Tomato) protein is Sesquiterpene synthase 12.